An 842-amino-acid polypeptide reads, in one-letter code: Elongation factor 2 (842 aa).

In terms of domain architecture, tr-type G spans 17-253; that stretch reads SNVRNMSVIA…LWGENYFNPK (237 aa). Residues 26–33, 104–108, and 158–161 contribute to the GTP site; these read AHVDHGKS, DSPGH, and NKVD. S568 bears the Phosphoserine mark. Position 574 is a phosphothreonine (T574). H699 carries the post-translational modification Diphthamide.

Belongs to the TRAFAC class translation factor GTPase superfamily. Classic translation factor GTPase family. EF-G/EF-2 subfamily.

The protein localises to the cytoplasm. Catalyzes the GTP-dependent ribosomal translocation step during translation elongation. During this step, the ribosome changes from the pre-translocational (PRE) to the post-translocational (POST) state as the newly formed A-site-bound peptidyl-tRNA and P-site-bound deacylated tRNA move to the P and E sites, respectively. Catalyzes the coordinated movement of the two tRNA molecules, the mRNA and conformational changes in the ribosome. The sequence is that of Elongation factor 2 (eft201) from Schizosaccharomyces pombe (strain 972 / ATCC 24843) (Fission yeast).